We begin with the raw amino-acid sequence, 291 residues long: ATP synthase gamma chain (291 aa).

The protein belongs to the ATPase gamma chain family. As to quaternary structure, F-type ATPases have 2 components, CF(1) - the catalytic core - and CF(0) - the membrane proton channel. CF(1) has five subunits: alpha(3), beta(3), gamma(1), delta(1), epsilon(1). CF(0) has three main subunits: a, b and c.

It is found in the cell inner membrane. Its function is as follows. Produces ATP from ADP in the presence of a proton gradient across the membrane. The gamma chain is believed to be important in regulating ATPase activity and the flow of protons through the CF(0) complex. The polypeptide is ATP synthase gamma chain (Sinorhizobium medicae (strain WSM419) (Ensifer medicae)).